The primary structure comprises 141 residues: Acetyltransferase ECA0875 (141 aa).

The N-acetyltransferase domain maps to 1–141 (MEIRIFRQDD…GKRLIEDREY (141 aa)).

This sequence belongs to the acetyltransferase family. YpeA subfamily.

This chain is Acetyltransferase ECA0875, found in Pectobacterium atrosepticum (strain SCRI 1043 / ATCC BAA-672) (Erwinia carotovora subsp. atroseptica).